We begin with the raw amino-acid sequence, 419 residues long: Gamma-glutamyl phosphate reductase (419 aa).

The protein belongs to the gamma-glutamyl phosphate reductase family.

The protein resides in the cytoplasm. The catalysed reaction is L-glutamate 5-semialdehyde + phosphate + NADP(+) = L-glutamyl 5-phosphate + NADPH + H(+). Its pathway is amino-acid biosynthesis; L-proline biosynthesis; L-glutamate 5-semialdehyde from L-glutamate: step 2/2. Catalyzes the NADPH-dependent reduction of L-glutamate 5-phosphate into L-glutamate 5-semialdehyde and phosphate. The product spontaneously undergoes cyclization to form 1-pyrroline-5-carboxylate. This Bordetella bronchiseptica (strain ATCC BAA-588 / NCTC 13252 / RB50) (Alcaligenes bronchisepticus) protein is Gamma-glutamyl phosphate reductase.